The following is a 971-amino-acid chain: Isoleucine--tRNA ligase (971 aa).

The short motif at 64 to 74 (PYANGHIHIGH) is the 'HIGH' region element. Glu602 provides a ligand contact to L-isoleucyl-5'-AMP. Residues 643-647 (KMSKS) carry the 'KMSKS' region motif. An ATP-binding site is contributed by Lys646.

Belongs to the class-I aminoacyl-tRNA synthetase family. IleS type 1 subfamily. As to quaternary structure, monomer.

It localises to the cytoplasm. It catalyses the reaction tRNA(Ile) + L-isoleucine + ATP = L-isoleucyl-tRNA(Ile) + AMP + diphosphate. In terms of biological role, catalyzes the attachment of isoleucine to tRNA(Ile). As IleRS can inadvertently accommodate and process structurally similar amino acids such as valine, to avoid such errors it has two additional distinct tRNA(Ile)-dependent editing activities. One activity is designated as 'pretransfer' editing and involves the hydrolysis of activated Val-AMP. The other activity is designated 'posttransfer' editing and involves deacylation of mischarged Val-tRNA(Ile). This chain is Isoleucine--tRNA ligase, found in Bartonella quintana (strain Toulouse) (Rochalimaea quintana).